A 386-amino-acid chain; its full sequence is Succinate--CoA ligase [ADP-forming] subunit beta (386 aa).

An ATP-grasp domain is found at 9 to 244; the sequence is KEILRKYGVP…HDEEDPLETR (236 aa). ATP is bound by residues K46, 53–55, E99, C102, and E107; that span reads GRG. Mg(2+) contacts are provided by N199 and D213. Residues N264 and 321 to 323 contribute to the substrate site; that span reads GIM.

This sequence belongs to the succinate/malate CoA ligase beta subunit family. Heterotetramer of two alpha and two beta subunits. Requires Mg(2+) as cofactor.

It carries out the reaction succinate + ATP + CoA = succinyl-CoA + ADP + phosphate. It catalyses the reaction GTP + succinate + CoA = succinyl-CoA + GDP + phosphate. It participates in carbohydrate metabolism; tricarboxylic acid cycle; succinate from succinyl-CoA (ligase route): step 1/1. Succinyl-CoA synthetase functions in the citric acid cycle (TCA), coupling the hydrolysis of succinyl-CoA to the synthesis of either ATP or GTP and thus represents the only step of substrate-level phosphorylation in the TCA. The beta subunit provides nucleotide specificity of the enzyme and binds the substrate succinate, while the binding sites for coenzyme A and phosphate are found in the alpha subunit. The polypeptide is Succinate--CoA ligase [ADP-forming] subunit beta (Rickettsia typhi (strain ATCC VR-144 / Wilmington)).